The following is a 611-amino-acid chain: uncharacterized protein (611 aa).

Belongs to the metallo-dependent hydrolases superfamily. N-acyl-D-amino-acid deacylase family.

This is an uncharacterized protein from Mycobacterium bovis (strain ATCC BAA-935 / AF2122/97).